A 125-amino-acid polypeptide reads, in one-letter code: Small ribosomal subunit protein uS12 (125 aa).

The disordered stretch occupies residues 1–30 (MPTISQLVRKPRAAKPLKSKVPALGNSPQK). The segment covering 9-18 (RKPRAAKPLK) has biased composition (basic residues). Position 89 is a 3-methylthioaspartic acid (Asp-89). Residues 103–125 (DTAGVKDRKQGRSKYGAKKPKSA) form a disordered region. The span at 113–125 (GRSKYGAKKPKSA) shows a compositional bias: basic residues.

Belongs to the universal ribosomal protein uS12 family. As to quaternary structure, part of the 30S ribosomal subunit. Contacts proteins S8 and S17. May interact with IF1 in the 30S initiation complex.

Functionally, with S4 and S5 plays an important role in translational accuracy. Its function is as follows. Interacts with and stabilizes bases of the 16S rRNA that are involved in tRNA selection in the A site and with the mRNA backbone. Located at the interface of the 30S and 50S subunits, it traverses the body of the 30S subunit contacting proteins on the other side and probably holding the rRNA structure together. The combined cluster of proteins S8, S12 and S17 appears to hold together the shoulder and platform of the 30S subunit. The protein is Small ribosomal subunit protein uS12 of Nitrosospira multiformis (strain ATCC 25196 / NCIMB 11849 / C 71).